A 284-amino-acid polypeptide reads, in one-letter code: Interferon antagonist OPG040 (284 aa).

ANK repeat units lie at residues 29–58 (HGHS…LKNL), 60–89 (ENEF…DDSQ), 93–122 (KGNT…RLMF), 127–157 (GWKT…TFDL), 159–188 (ILLS…STNT), and 193–222 (LFIP…NIYS).

The protein belongs to the orthopoxvirus OPG039 family.

The protein resides in the host cytoplasm. It localises to the host nucleus. Inhibits antiviral activity induced by type I interferons. Does not block signal transduction of IFN, but is important to counter the host antiviral state induced by a pre-treatment with IFN. Plays a role in the inhibition of host NF-kappa-B activation by preventing the acetylation of the RELA/p65 subunit of NF-kappaB. This Bos taurus (Bovine) protein is Interferon antagonist OPG040 (OPG039).